A 1145-amino-acid chain; its full sequence is Trafficking protein particle complex subunit 10 (1145 aa).

The protein belongs to the TMEM1 family. In terms of assembly, part of the multisubunit TRAPP (transport protein particle) complex. Interacts with Shal (via C-terminal dendritic targeting motif). As to expression, co-expressed with Shal in the nervous system.

Its subcellular location is the golgi apparatus. It is found in the cis-Golgi network. The protein resides in the cell projection. It localises to the dendrite. The protein localises to the perikaryon. Functionally, may play a role in vesicular transport from endoplasmic reticulum to Golgi. Has a role in one of the several mechanisms underlying dendritic localization of Shal channels. The polypeptide is Trafficking protein particle complex subunit 10 (SIDL) (Drosophila melanogaster (Fruit fly)).